A 447-amino-acid polypeptide reads, in one-letter code: Tubulin beta chain (447 aa).

Residues Q11, E69, S138, G142, T143, G144, N204, and N226 each contribute to the GTP site. E69 is a binding site for Mg(2+). The tract at residues 424 to 447 is disordered; that stretch reads QYQEASVSEGEEEYDEEAPLEGEE. Acidic residues predominate over residues 432 to 447; sequence EGEEEYDEEAPLEGEE.

It belongs to the tubulin family. Dimer of alpha and beta chains. A typical microtubule is a hollow water-filled tube with an outer diameter of 25 nm and an inner diameter of 15 nM. Alpha-beta heterodimers associate head-to-tail to form protofilaments running lengthwise along the microtubule wall with the beta-tubulin subunit facing the microtubule plus end conferring a structural polarity. Microtubules usually have 13 protofilaments but different protofilament numbers can be found in some organisms and specialized cells. Mg(2+) serves as cofactor.

Its subcellular location is the cytoplasm. It is found in the cytoskeleton. Functionally, tubulin is the major constituent of microtubules, a cylinder consisting of laterally associated linear protofilaments composed of alpha- and beta-tubulin heterodimers. Microtubules grow by the addition of GTP-tubulin dimers to the microtubule end, where a stabilizing cap forms. Below the cap, tubulin dimers are in GDP-bound state, owing to GTPase activity of alpha-tubulin. This Dothistroma septosporum (Red band needle blight fungus) protein is Tubulin beta chain (TUB1).